Here is a 372-residue protein sequence, read N- to C-terminus: NAD(P)H-quinone oxidoreductase subunit 1 (372 aa).

A run of 9 helical transmembrane segments spans residues 27 to 47 (LLWL…GVLV), 65 to 85 (PEYI…KLIF), 97 to 117 (WLFT…YIIV), 128 to 148 (LAMG…GLLM), 176 to 196 (LALA…VEIV), 204 to 224 (ILSW…IAAL), 254 to 274 (FALF…LVSV), 308 to 328 (VLGI…AILL), and 347 to 367 (FLLP…LAFP).

Belongs to the complex I subunit 1 family. In terms of assembly, NDH-1 is composed of at least 11 different subunits.

The protein resides in the cellular thylakoid membrane. It carries out the reaction a plastoquinone + NADH + (n+1) H(+)(in) = a plastoquinol + NAD(+) + n H(+)(out). It catalyses the reaction a plastoquinone + NADPH + (n+1) H(+)(in) = a plastoquinol + NADP(+) + n H(+)(out). NDH-1 shuttles electrons from an unknown electron donor, via FMN and iron-sulfur (Fe-S) centers, to quinones in the respiratory and/or the photosynthetic chain. The immediate electron acceptor for the enzyme in this species is believed to be plastoquinone. Couples the redox reaction to proton translocation, and thus conserves the redox energy in a proton gradient. In Thermosynechococcus vestitus (strain NIES-2133 / IAM M-273 / BP-1), this protein is NAD(P)H-quinone oxidoreductase subunit 1.